A 161-amino-acid chain; its full sequence is Cyclic pyranopterin monophosphate synthase (161 aa).

Substrate contacts are provided by residues 75–77 and 113–114; these read LCH and ME. The active site involves Asp-128.

Belongs to the MoaC family. In terms of assembly, homohexamer; trimer of dimers.

The enzyme catalyses (8S)-3',8-cyclo-7,8-dihydroguanosine 5'-triphosphate = cyclic pyranopterin phosphate + diphosphate. The protein operates within cofactor biosynthesis; molybdopterin biosynthesis. Catalyzes the conversion of (8S)-3',8-cyclo-7,8-dihydroguanosine 5'-triphosphate to cyclic pyranopterin monophosphate (cPMP). The protein is Cyclic pyranopterin monophosphate synthase of Methylobacillus flagellatus (strain ATCC 51484 / DSM 6875 / VKM B-1610 / KT).